The sequence spans 211 residues: tRNA (guanine-N(7)-)-methyltransferase (211 aa).

S-adenosyl-L-methionine-binding residues include Glu-43, Glu-68, Asp-95, and Asp-117. Residue Asp-117 is part of the active site. Substrate-binding positions include Lys-121, Asp-153, and 190 to 193 (TEYE).

The protein belongs to the class I-like SAM-binding methyltransferase superfamily. TrmB family.

It carries out the reaction guanosine(46) in tRNA + S-adenosyl-L-methionine = N(7)-methylguanosine(46) in tRNA + S-adenosyl-L-homocysteine. Its pathway is tRNA modification; N(7)-methylguanine-tRNA biosynthesis. Functionally, catalyzes the formation of N(7)-methylguanine at position 46 (m7G46) in tRNA. The polypeptide is tRNA (guanine-N(7)-)-methyltransferase (Staphylococcus saprophyticus subsp. saprophyticus (strain ATCC 15305 / DSM 20229 / NCIMB 8711 / NCTC 7292 / S-41)).